A 200-amino-acid chain; its full sequence is ATP-dependent Clp protease proteolytic subunit (200 aa).

Ser103 acts as the Nucleophile in catalysis. Residue His128 is part of the active site.

The protein belongs to the peptidase S14 family. As to quaternary structure, fourteen ClpP subunits assemble into 2 heptameric rings which stack back to back to give a disk-like structure with a central cavity, resembling the structure of eukaryotic proteasomes.

Its subcellular location is the cytoplasm. It catalyses the reaction Hydrolysis of proteins to small peptides in the presence of ATP and magnesium. alpha-casein is the usual test substrate. In the absence of ATP, only oligopeptides shorter than five residues are hydrolyzed (such as succinyl-Leu-Tyr-|-NHMec, and Leu-Tyr-Leu-|-Tyr-Trp, in which cleavage of the -Tyr-|-Leu- and -Tyr-|-Trp bonds also occurs).. Cleaves peptides in various proteins in a process that requires ATP hydrolysis. Has a chymotrypsin-like activity. Plays a major role in the degradation of misfolded proteins. The polypeptide is ATP-dependent Clp protease proteolytic subunit (Vibrio vulnificus (strain CMCP6)).